The primary structure comprises 161 residues: Phosphopantetheine adenylyltransferase (161 aa).

Thr-11 provides a ligand contact to substrate. ATP-binding positions include 11–12 and His-19; that span reads TF. Substrate contacts are provided by Lys-43, Thr-75, and Arg-89. ATP-binding positions include 90-92, Glu-100, and 125-131; these read GLR and YSFLSSS.

The protein belongs to the bacterial CoaD family. Homohexamer. Mg(2+) is required as a cofactor.

It localises to the cytoplasm. It carries out the reaction (R)-4'-phosphopantetheine + ATP + H(+) = 3'-dephospho-CoA + diphosphate. It functions in the pathway cofactor biosynthesis; coenzyme A biosynthesis; CoA from (R)-pantothenate: step 4/5. Its function is as follows. Reversibly transfers an adenylyl group from ATP to 4'-phosphopantetheine, yielding dephospho-CoA (dPCoA) and pyrophosphate. The protein is Phosphopantetheine adenylyltransferase of Listeria welshimeri serovar 6b (strain ATCC 35897 / DSM 20650 / CCUG 15529 / CIP 8149 / NCTC 11857 / SLCC 5334 / V8).